Reading from the N-terminus, the 227-residue chain is 2,3-bisphosphoglycerate-dependent phosphoglycerate mutase (227 aa).

Residues 7–14 (RHGQSEWN), 20–21 (TG), R59, 86–89 (ERHY), K97, 113–114 (RR), and 182–183 (GN) contribute to the substrate site. H8 (tele-phosphohistidine intermediate) is an active-site residue. E86 acts as the Proton donor/acceptor in catalysis.

It belongs to the phosphoglycerate mutase family. BPG-dependent PGAM subfamily. In terms of assembly, homodimer.

It catalyses the reaction (2R)-2-phosphoglycerate = (2R)-3-phosphoglycerate. It functions in the pathway carbohydrate degradation; glycolysis; pyruvate from D-glyceraldehyde 3-phosphate: step 3/5. Catalyzes the interconversion of 2-phosphoglycerate and 3-phosphoglycerate. The polypeptide is 2,3-bisphosphoglycerate-dependent phosphoglycerate mutase (Neisseria meningitidis serogroup C (strain 053442)).